A 328-amino-acid chain; its full sequence is D-cysteine desulfhydrase (328 aa).

The residue at position 51 (K51) is an N6-(pyridoxal phosphate)lysine.

This sequence belongs to the ACC deaminase/D-cysteine desulfhydrase family. Homodimer. Pyridoxal 5'-phosphate is required as a cofactor.

It catalyses the reaction D-cysteine + H2O = hydrogen sulfide + pyruvate + NH4(+) + H(+). Catalyzes the alpha,beta-elimination reaction of D-cysteine and of several D-cysteine derivatives. It could be a defense mechanism against D-cysteine. The polypeptide is D-cysteine desulfhydrase (Salmonella paratyphi B (strain ATCC BAA-1250 / SPB7)).